The sequence spans 255 residues: Epoxyqueuosine reductase QueH (255 aa).

Residues Cys44, Cys45, Cys128, and Cys131 each contribute to the [4Fe-4S] cluster site. Cys210 and Cys212 form a disulfide bridge.

The protein belongs to the QueH family.

The catalysed reaction is epoxyqueuosine(34) in tRNA + AH2 = queuosine(34) in tRNA + A + H2O. It functions in the pathway tRNA modification; tRNA-queuosine biosynthesis. In terms of biological role, catalyzes the conversion of epoxyqueuosine (oQ) to queuosine (Q), which is a hypermodified base found in the wobble positions of tRNA(Asp), tRNA(Asn), tRNA(His) and tRNA(Tyr). The protein is Epoxyqueuosine reductase QueH of Streptococcus pyogenes serotype M1.